We begin with the raw amino-acid sequence, 299 residues long: MKKNILNLALVGALSASFLMAKPAHNANNSTHNTKETTDASAGVLATVDGRPITKSDFDMIKQRNPNFDFDKLKEKEKEALIEQAIRTALVENEAKAEKLNQTPEFKAMMEAVKKQALVEFWAKKQAEEVKKIQIPEKEMQDFYNANKDQLFVKQEAHARHILVKTEDEAKRIISEIDKQPKAKKEAKFIELANRDTIDPNSKNAQNGGDLGKFQKNQMAPDFSKAAFALTPGDYTKTPVKTEFGYHIIYLISKDSPVTYTYEQAKPTIKGMLQEKLFQERMNQRIEELRKHAKIVINK.

The first 21 residues, 1–21, serve as a signal peptide directing secretion; sequence MKKNILNLALVGALSASFLMA. In terms of domain architecture, PpiC spans 154–253; that stretch reads KQEAHARHIL…FGYHIIYLIS (100 aa).

The catalysed reaction is [protein]-peptidylproline (omega=180) = [protein]-peptidylproline (omega=0). This Helicobacter pylori (strain J99 / ATCC 700824) (Campylobacter pylori J99) protein is Putative peptidyl-prolyl cis-trans isomerase jhp_0161.